Here is a 185-residue protein sequence, read N- to C-terminus: Ribosome-recycling factor (185 aa).

This sequence belongs to the RRF family.

Its subcellular location is the cytoplasm. Its function is as follows. Responsible for the release of ribosomes from messenger RNA at the termination of protein biosynthesis. May increase the efficiency of translation by recycling ribosomes from one round of translation to another. The protein is Ribosome-recycling factor of Legionella pneumophila (strain Corby).